A 423-amino-acid chain; its full sequence is Sulfate adenylyltransferase (423 aa).

This sequence belongs to the sulfate adenylyltransferase family.

It carries out the reaction sulfate + ATP + H(+) = adenosine 5'-phosphosulfate + diphosphate. The protein operates within sulfur metabolism; hydrogen sulfide biosynthesis; sulfite from sulfate: step 1/3. This is Sulfate adenylyltransferase from Desulfovibrio desulfuricans (strain ATCC 27774 / DSM 6949 / MB).